Here is a 339-residue protein sequence, read N- to C-terminus: DNA-directed RNA polymerase subunit alpha (339 aa).

The interval Met-1–Glu-233 is alpha N-terminal domain (alpha-NTD). The tract at residues Ile-267–Phe-339 is alpha C-terminal domain (alpha-CTD).

It belongs to the RNA polymerase alpha chain family. As to quaternary structure, in plastids the minimal PEP RNA polymerase catalytic core is composed of four subunits: alpha, beta, beta', and beta''. When a (nuclear-encoded) sigma factor is associated with the core the holoenzyme is formed, which can initiate transcription.

The protein resides in the plastid. Its subcellular location is the chloroplast. The enzyme catalyses RNA(n) + a ribonucleoside 5'-triphosphate = RNA(n+1) + diphosphate. Its function is as follows. DNA-dependent RNA polymerase catalyzes the transcription of DNA into RNA using the four ribonucleoside triphosphates as substrates. The polypeptide is DNA-directed RNA polymerase subunit alpha (Populus trichocarpa (Western balsam poplar)).